Consider the following 569-residue polypeptide: Falcipain-1 (569 aa).

Residues 1–35 (MVAIKEMKEFAFARPSLVETLNKKKKFLKKKEKRT) are Cytoplasmic-facing. A propeptide spans 1 to 332 (MVAIKEMKEF…KRNEKDIFSK (332 aa)) (activation peptide). A helical; Signal-anchor for type II membrane protein membrane pass occupies residues 36 to 56 (FVLSIYAFITFIIFCIGILYF). Topologically, residues 57–569 (TNKSSAHNNN…IGEEVFYPIL (513 aa)) are lumenal. N-linked (GlcNAc...) asparagine glycosylation is found at N58, N98, N121, and N127. Residues 97–118 (LNESSNEEDEEKYTLNSETYNN) are disordered. 3 disulfides stabilise this stretch: C354–C395, C388–C428, and C413–C433. C357 is a catalytic residue. N479 and N487 each carry an N-linked (GlcNAc...) asparagine glycan. A disulfide bond links C482 and C558. Catalysis depends on residues H488 and N533.

It belongs to the peptidase C1 family. Post-translationally, contains disulfide bonds.

It localises to the membrane. Its subcellular location is the cytoplasmic granule. Cysteine protease. In the mosquito midgut, required for parasite development. This is Falcipain-1 from Plasmodium falciparum (isolate 3D7).